A 249-amino-acid chain; its full sequence is Triosephosphate isomerase (249 aa).

Substrate contacts are provided by N12 and K14. Position 14 is an N6-acetyllysine (K14). At Y68 the chain carries 3'-nitrotyrosine. S80 and S106 each carry phosphoserine. K142 is covalently cross-linked (Glycyl lysine isopeptide (Lys-Gly) (interchain with G-Cter in SUMO1)). Position 149 is an N6-succinyllysine (K149). Position 156 is an N6-acetyllysine; alternate (K156). K156 bears the N6-succinyllysine; alternate mark. S159 bears the Phosphoserine mark. The Proton acceptor role is filled by E166. T173 bears the Phosphothreonine mark. K194 is subject to N6-acetyllysine; alternate. An N6-succinyllysine; alternate modification is found at K194. An N6-methyllysine; alternate modification is found at K194. S198 carries the phosphoserine modification. Y209 carries the 3'-nitrotyrosine modification. Phosphoserine is present on S212. The residue at position 214 (T214) is a Phosphothreonine. S223 is subject to Phosphoserine. Position 238 is an N6-acetyllysine (K238).

The protein belongs to the triosephosphate isomerase family. Homodimer.

It is found in the cytoplasm. It catalyses the reaction D-glyceraldehyde 3-phosphate = dihydroxyacetone phosphate. It carries out the reaction dihydroxyacetone phosphate = methylglyoxal + phosphate. Its pathway is carbohydrate biosynthesis; gluconeogenesis. It participates in carbohydrate degradation; glycolysis; D-glyceraldehyde 3-phosphate from glycerone phosphate: step 1/1. In terms of biological role, triosephosphate isomerase is an extremely efficient metabolic enzyme that catalyzes the interconversion between dihydroxyacetone phosphate (DHAP) and D-glyceraldehyde-3-phosphate (G3P) in glycolysis and gluconeogenesis. Its function is as follows. It is also responsible for the non-negligible production of methylglyoxal a reactive cytotoxic side-product that modifies and can alter proteins, DNA and lipids. The protein is Triosephosphate isomerase of Mesocricetus auratus (Golden hamster).